The sequence spans 74 residues: Psi-conotoxin PrIIIE (74 aa).

The first 19 residues, 1 to 19, serve as a signal peptide directing secretion; it reads MSKLGVLLTICLLLFPITA. Residues 20 to 50 constitute a propeptide that is removed on maturation; sequence LPVDGDQPADRPVERMQDNISSEQHPFFEKR. Cystine bridges form between C54–C66, C55–C71, and C61–C72. C72 is modified (cysteine amide).

Belongs to the conotoxin M superfamily. As to expression, expressed by the venom duct.

The protein localises to the secreted. Psi-conotoxins act on postsynaptic membranes, and act as non-competitive antagonist of nicotinic acetylcholine receptors (nAChR). Reversibly inhibits both adult- and fetal-types nAChR. The inhibition potency against the adult- (alpha-1/beta-1/epsilon/delta) is higher than against the fetal-type (alpha-1/beta-1/gamma/delta). Induces flaccid paralysis in goldfish, but does not induce any remarkable behavior in mice and does not block action potential in directly stimulated frog muscle preparations. This is Psi-conotoxin PrIIIE from Conus parius (Cone snail).